Here is a 517-residue protein sequence, read N- to C-terminus: Crotonobetaine/carnitine--CoA ligase (517 aa).

Belongs to the ATP-dependent AMP-binding enzyme family.

It carries out the reaction 4-(trimethylamino)butanoate + ATP + CoA = 4-(trimethylamino)butanoyl-CoA + AMP + diphosphate. The enzyme catalyses crotonobetaine + ATP + CoA = crotonobetainyl-CoA + AMP + diphosphate. It catalyses the reaction (R)-carnitine + ATP + CoA = (R)-carnitinyl-CoA + AMP + diphosphate. It participates in amine and polyamine metabolism; carnitine metabolism. Catalyzes the transfer of CoA to carnitine, generating the initial carnitinyl-CoA needed for the CaiB reaction cycle. Also has activity toward crotonobetaine and gamma-butyrobetaine. The polypeptide is Crotonobetaine/carnitine--CoA ligase (Escherichia coli (strain K12 / MC4100 / BW2952)).